The sequence spans 109 residues: ATP-dependent Clp protease adapter protein ClpS 2 (109 aa).

Positions 1–24 (MAGDGGRSGPSTPSTSVITKTKPR) are disordered.

It belongs to the ClpS family. In terms of assembly, binds to the N-terminal domain of the chaperone ClpA.

In terms of biological role, involved in the modulation of the specificity of the ClpAP-mediated ATP-dependent protein degradation. This chain is ATP-dependent Clp protease adapter protein ClpS 2, found in Rhodopseudomonas palustris (strain ATCC BAA-98 / CGA009).